Here is a 165-residue protein sequence, read N- to C-terminus: Large ribosomal subunit protein uL22c (165 aa).

The protein belongs to the universal ribosomal protein uL22 family. In terms of assembly, part of the 50S ribosomal subunit.

It localises to the plastid. Its subcellular location is the chloroplast. Its function is as follows. This protein binds specifically to 23S rRNA. In terms of biological role, the globular domain of the protein is located near the polypeptide exit tunnel on the outside of the subunit, while an extended beta-hairpin is found that lines the wall of the exit tunnel in the center of the 70S ribosome. The protein is Large ribosomal subunit protein uL22c (rpl22) of Daucus carota (Wild carrot).